Here is a 238-residue protein sequence, read N- to C-terminus: Uridylate kinase (238 aa).

12 to 15 (KLSG) contacts ATP. Residue G54 coordinates UMP. G55 and R59 together coordinate ATP. UMP contacts are provided by residues D74 and 135-142 (TGNPYFTT). ATP-binding residues include T162, N163, Y168, and D171.

The protein belongs to the UMP kinase family. In terms of assembly, homohexamer.

It is found in the cytoplasm. The catalysed reaction is UMP + ATP = UDP + ADP. The protein operates within pyrimidine metabolism; CTP biosynthesis via de novo pathway; UDP from UMP (UMPK route): step 1/1. With respect to regulation, inhibited by UTP. In terms of biological role, catalyzes the reversible phosphorylation of UMP to UDP. The protein is Uridylate kinase of Bradyrhizobium sp. (strain BTAi1 / ATCC BAA-1182).